The sequence spans 318 residues: tRNA-cytidine(32) 2-sulfurtransferase (318 aa).

A PP-loop motif motif is present at residues Ser65–Ser70. [4Fe-4S] cluster contacts are provided by Cys140, Cys143, and Cys231.

The protein belongs to the TtcA family. In terms of assembly, homodimer. Mg(2+) is required as a cofactor. It depends on [4Fe-4S] cluster as a cofactor.

It is found in the cytoplasm. The catalysed reaction is cytidine(32) in tRNA + S-sulfanyl-L-cysteinyl-[cysteine desulfurase] + AH2 + ATP = 2-thiocytidine(32) in tRNA + L-cysteinyl-[cysteine desulfurase] + A + AMP + diphosphate + H(+). It participates in tRNA modification. Functionally, catalyzes the ATP-dependent 2-thiolation of cytidine in position 32 of tRNA, to form 2-thiocytidine (s(2)C32). The sulfur atoms are provided by the cysteine/cysteine desulfurase (IscS) system. The protein is tRNA-cytidine(32) 2-sulfurtransferase of Herminiimonas arsenicoxydans.